Here is a 299-residue protein sequence, read N- to C-terminus: Hairy/enhancer-of-split related with YRPW motif protein 1 (299 aa).

The segment at 1 to 53 (MKRAHPDYSSSDSELDETIEVEKESADENGNLSSALCSMSPTTSSQVLARKRR) is disordered. Residues 28–47 (ENGNLSSALCSMSPTTSSQV) are compositionally biased toward polar residues. Residues 48–117 (LARKRRRGII…GGKGYFDAHA (70 aa)) form a transcriptional repression and interaction with NCOR1 and SIN3A region. Residues 49-104 (ARKRRRGIIEKRRRDRINNSLSELRRLVPSAFEKQGSAKLEKAEILQMTVDHLKML) form the bHLH domain. One can recognise an Orange domain in the interval 122–158 (YRSLGFRECLAEVARYLSIIEGLDASDPLLVRLVSHL). Residues 194 to 234 (LLLPQNGHGNAGTAASPTEPHHQGRLASAHPEAPALRAPPS) are disordered. Positions 289 to 292 (YRPW) match the YRPW motif motif.

The protein belongs to the HEY family. May self-associate. Interacts with HES1, NCOR1 and SIN3A. Interacts with GATA4, GATA6 and HDAC1 and HEYL. Interacts with CCDC89/BOIP. As to expression, expressed in somitic mesoderm, brain, central nervous system, kidney, heart, nasal epithelium, limbs, lung, muscle, ovary and testis.

The protein localises to the nucleus. Transcriptional repressor which binds preferentially to the canonical E box sequence 5'-CACGTG-3'. Downstream effector of Notch signaling required for cardiovascular development. Specifically required for the Notch-induced endocardial epithelial to mesenchymal transition, which is itself criticial for cardiac valve and septum development. May be required in conjunction with HEY2 to specify arterial cell fate or identity. Promotes maintenance of neuronal precursor cells and glial versus neuronal fate specification. Represses transcription by the cardiac transcriptional activators GATA4 and GATA6 and by the neuronal bHLH factors ASCL1/MASH1 and NEUROD4/MATH3. This chain is Hairy/enhancer-of-split related with YRPW motif protein 1 (Hey1), found in Mus musculus (Mouse).